Here is a 120-residue protein sequence, read N- to C-terminus: Small ribosomal subunit protein uS13 (120 aa).

Positions 93–120 (RKGLPVRGQTTKNNARTRKGKKKTVGSK) are disordered. Over residues 107–120 (ARTRKGKKKTVGSK) the composition is skewed to basic residues.

The protein belongs to the universal ribosomal protein uS13 family. In terms of assembly, part of the 30S ribosomal subunit. Forms a loose heterodimer with protein S19. Forms two bridges to the 50S subunit in the 70S ribosome.

In terms of biological role, located at the top of the head of the 30S subunit, it contacts several helices of the 16S rRNA. In the 70S ribosome it contacts the 23S rRNA (bridge B1a) and protein L5 of the 50S subunit (bridge B1b), connecting the 2 subunits; these bridges are implicated in subunit movement. Contacts the tRNAs in the A and P-sites. The chain is Small ribosomal subunit protein uS13 from Helicobacter pylori (strain P12).